Reading from the N-terminus, the 491-residue chain is 3-epi-6-deoxocathasterone 23-monooxygenase CYP90D1 (491 aa).

The chain crosses the membrane as a helical span at residues 7-27 (LLFFSFFFFIIIVIFNKINGL). Cysteine 442 serves as a coordination point for heme.

Belongs to the cytochrome P450 family. Requires heme as cofactor. In terms of tissue distribution, expressed in leaf vascular tissue.

It localises to the endoplasmic reticulum membrane. It carries out the reaction 3-epi-6-deoxocathasterone + reduced [NADPH--hemoprotein reductase] + O2 = 6-deoxotyphasterol + oxidized [NADPH--hemoprotein reductase] + H2O + H(+). The catalysed reaction is (22S,24R)-22-hydroxy-5alpha-ergostan-3-one + reduced [NADPH--hemoprotein reductase] + O2 = 3-dehydro-6-deoxoteasterone + oxidized [NADPH--hemoprotein reductase] + H2O + H(+). It functions in the pathway plant hormone biosynthesis; brassinosteroid biosynthesis. Involved in brassinosteroid (BR) biosynthesis. May convert teasterone (TE) to 3-dehydroteasterone (3DT, 3-DHT), or 6-deoxoteasterone (6-deoxoTE) to 3-dehydro-6-deoxoteasterone (6-deoxo3DT, 6-deoxo3DHT). C-23 hydroxylase that converts directly (22S,24R)-22-hydroxy-5-alpha-ergostan-3-one and 3-epi-6-deoxocathasterone to 3-dehydro-6-deoxoteasterone (6-deoxo3DT, 6-deoxo3DHT) and 6-deoxotyphasterol (6-deoxoTY), respectively. These C-23 hydroxylation shortcuts bypass campestanol, 6-deoxocathasterone, and 6-deoxoteasterone (6-deoxoTE). Also catalyzes the conversion of cathasterone to teasterone (TE), 6-deoxotyphasterol (6-deoxoTY) to 6-deoxocathasterone (6-deoxoCT), (22S,24R)-22-hydroxyergost-4-en-3-one (22-OH-4-en-3-one) to (22R,23R)-22,23-dihydroxy-campest-4-en-3-one (22,23-diOH-4-en-3-one) and (22S)-22-hydroxycampesterol (22-OHCR) to (22R,23R)-22,23-dihydroxycampesterol (22,23-diOHCR). This is 3-epi-6-deoxocathasterone 23-monooxygenase CYP90D1 from Arabidopsis thaliana (Mouse-ear cress).